A 252-amino-acid polypeptide reads, in one-letter code: Carbohydrate deacetylase (252 aa).

Mg(2+) is bound by residues His59 and His122.

The protein belongs to the YdjC deacetylase family. Homodimer. Mg(2+) serves as cofactor.

In terms of biological role, probably catalyzes the deacetylation of acetylated carbohydrates an important step in the degradation of oligosaccharides. The sequence is that of Carbohydrate deacetylase from Vibrio cholerae serotype O1 (strain ATCC 39315 / El Tor Inaba N16961).